A 327-amino-acid chain; its full sequence is 2-methoxy-6-polyprenyl-1,4-benzoquinol methylase, mitochondrial (327 aa).

The transit peptide at Met-1–Ala-49 directs the protein to the mitochondrion. Residues Thr-117, Asp-171, and Asp-199–Ala-200 contribute to the S-adenosyl-L-methionine site.

It belongs to the class I-like SAM-binding methyltransferase superfamily. MenG/UbiE family. As to quaternary structure, component of a multi-subunit COQ enzyme complex, composed of at least COQ3, COQ4, COQ5, COQ6, COQ7 and COQ9. Interacts with PYURF; the interaction is direct, stabilizes COQ5 protein and associates PYURF with COQ enzyme complex.

Its subcellular location is the mitochondrion inner membrane. The catalysed reaction is 2-methoxy-6-(all-trans-decaprenyl)benzene-1,4-diol + S-adenosyl-L-methionine = 5-methoxy-2-methyl-3-(all-trans-decaprenyl)benzene-1,4-diol + S-adenosyl-L-homocysteine + H(+). The protein operates within cofactor biosynthesis; ubiquinone biosynthesis. Functionally, methyltransferase required for the conversion of 2-decaprenyl-6-methoxy-1,4-benzoquinol (DDMQH2) to 2-decaprenyl-3-methyl-6-methoxy-1,4-benzoquinol (DMQH2). The polypeptide is 2-methoxy-6-polyprenyl-1,4-benzoquinol methylase, mitochondrial (Rattus norvegicus (Rat)).